The chain runs to 98 residues: Cell division protein FtsB (98 aa).

Residues 1 to 3 (MKR) lie on the Cytoplasmic side of the membrane. The helical transmembrane segment at 4-21 (LLIVLIALLAMLEYRLWF) threads the bilayer. The Periplasmic segment spans residues 22 to 98 (GDKSLAESFH…GGERDKPSND (77 aa)). A coiled-coil region spans residues 31 to 74 (HLQEQIKLQQQSNAQLVARNQILREEISDLRSGTEALEERARNE).

The protein belongs to the FtsB family. Part of a complex composed of FtsB, FtsL and FtsQ.

The protein resides in the cell inner membrane. Functionally, essential cell division protein. May link together the upstream cell division proteins, which are predominantly cytoplasmic, with the downstream cell division proteins, which are predominantly periplasmic. This Shewanella halifaxensis (strain HAW-EB4) protein is Cell division protein FtsB.